A 218-amino-acid polypeptide reads, in one-letter code: uncharacterized protein (218 aa).

The signal sequence occupies residues 1–17 (MLKKIIILFLGIFLLSS). Cysteine 18 is lipidated: N-palmitoyl cysteine. A lipid anchor (S-diacylglycerol cysteine) is attached at cysteine 18. A coiled-coil region spans residues 136-164 (YKEKKIEEELNQIKAMLKETKRDITKYTC).

The protein localises to the cell membrane. This is an uncharacterized protein from Rickettsia typhi (strain ATCC VR-144 / Wilmington).